Consider the following 264-residue polypeptide: ATP synthase subunit a (264 aa).

The next 7 helical transmembrane spans lie at 30 to 50, 90 to 110, 111 to 131, 134 to 154, 177 to 197, 208 to 228, and 235 to 255; these read WNID…WLFY, IAPL…MDMI, PVDW…KVVP, DVNI…YYSI, IPVN…SLAL, LIFI…ALGV, and LIFH…LTIV.

It belongs to the ATPase A chain family. F-type ATPases have 2 components, CF(1) - the catalytic core - and CF(0) - the membrane proton channel. CF(1) has five subunits: alpha(3), beta(3), gamma(1), delta(1), epsilon(1). CF(0) has three main subunits: a(1), b(2) and c(9-12). The alpha and beta chains form an alternating ring which encloses part of the gamma chain. CF(1) is attached to CF(0) by a central stalk formed by the gamma and epsilon chains, while a peripheral stalk is formed by the delta and b chains.

It is found in the cell inner membrane. Functionally, key component of the proton channel; it plays a direct role in the translocation of protons across the membrane. The protein is ATP synthase subunit a of Shewanella frigidimarina (strain NCIMB 400).